The primary structure comprises 78 residues: Large ribosomal subunit protein bL28 (78 aa).

Residues 1–21 (MARVCQVTGKGPMTGNNVSHA) form a disordered region.

It belongs to the bacterial ribosomal protein bL28 family.

The sequence is that of Large ribosomal subunit protein bL28 from Bordetella petrii (strain ATCC BAA-461 / DSM 12804 / CCUG 43448).